The sequence spans 87 residues: Exodeoxyribonuclease 7 small subunit (87 aa).

The protein belongs to the XseB family. As to quaternary structure, heterooligomer composed of large and small subunits.

It localises to the cytoplasm. The enzyme catalyses Exonucleolytic cleavage in either 5'- to 3'- or 3'- to 5'-direction to yield nucleoside 5'-phosphates.. Bidirectionally degrades single-stranded DNA into large acid-insoluble oligonucleotides, which are then degraded further into small acid-soluble oligonucleotides. This chain is Exodeoxyribonuclease 7 small subunit, found in Pelotomaculum thermopropionicum (strain DSM 13744 / JCM 10971 / SI).